The sequence spans 185 residues: Probable nicotinate-nucleotide adenylyltransferase (185 aa).

This sequence belongs to the NadD family.

The catalysed reaction is nicotinate beta-D-ribonucleotide + ATP + H(+) = deamido-NAD(+) + diphosphate. Its pathway is cofactor biosynthesis; NAD(+) biosynthesis; deamido-NAD(+) from nicotinate D-ribonucleotide: step 1/1. Catalyzes the reversible adenylation of nicotinate mononucleotide (NaMN) to nicotinic acid adenine dinucleotide (NaAD). In Cereibacter sphaeroides (strain ATCC 17025 / ATH 2.4.3) (Rhodobacter sphaeroides), this protein is Probable nicotinate-nucleotide adenylyltransferase.